We begin with the raw amino-acid sequence, 431 residues long: Enolase (431 aa).

Glutamine 175 contributes to the (2R)-2-phosphoglycerate binding site. Glutamate 217 serves as the catalytic Proton donor. Aspartate 254, glutamate 295, and aspartate 322 together coordinate Mg(2+). Residues lysine 347, arginine 376, serine 377, and lysine 398 each coordinate (2R)-2-phosphoglycerate. The active-site Proton acceptor is lysine 347.

It belongs to the enolase family. It depends on Mg(2+) as a cofactor.

It localises to the cytoplasm. It is found in the secreted. The protein localises to the cell surface. It carries out the reaction (2R)-2-phosphoglycerate = phosphoenolpyruvate + H2O. Its pathway is carbohydrate degradation; glycolysis; pyruvate from D-glyceraldehyde 3-phosphate: step 4/5. Functionally, catalyzes the reversible conversion of 2-phosphoglycerate (2-PG) into phosphoenolpyruvate (PEP). It is essential for the degradation of carbohydrates via glycolysis. In Anaplasma marginale (strain St. Maries), this protein is Enolase.